The following is a 249-amino-acid chain: Proteasome subunit alpha 2 (249 aa).

Position 1 is an N-acetylmethionine (Met-1).

The protein belongs to the peptidase T1A family. In terms of assembly, the 20S proteasome core is composed of 14 alpha and 14 beta subunits that assemble into four stacked heptameric rings, resulting in a barrel-shaped structure. The two inner rings, each composed of seven catalytic beta subunits, are sandwiched by two outer rings, each composed of seven alpha subunits. H.volcanii produces at least 2 types of 20S proteasomes: an alpha1-beta proteasome and a proteasome containing all three subunits (alpha1, alpha2, and beta) that appears to be asymmetrical with homo-oligomeric alpha1 and alpha2 rings positioned on separate ends. The catalytic chamber with the active sites is on the inside of the barrel. Has probably a gated structure, the ends of the cylinder being occluded by the N-termini of the alpha-subunits. Is likely capped at one or both ends by the proteasome regulatory ATPase, PAN.

Its subcellular location is the cytoplasm. The formation of the proteasomal ATPase PAN-20S proteasome complex, via the docking of the C-termini of PAN into the intersubunit pockets in the alpha-rings, triggers opening of the gate for substrate entry. Interconversion between the open-gate and close-gate conformations leads to a dynamic regulation of the 20S proteasome proteolysis activity. Functionally, component of the proteasome core, a large protease complex with broad specificity involved in protein degradation. The H.volcanii alpha1-beta-alpha2 proteasome is able to cleave oligopeptides after Tyr and thus displays chymotrypsin-like activity. The protein is Proteasome subunit alpha 2 of Haloferax volcanii (strain ATCC 29605 / DSM 3757 / JCM 8879 / NBRC 14742 / NCIMB 2012 / VKM B-1768 / DS2) (Halobacterium volcanii).